A 542-amino-acid chain; its full sequence is CTP synthase (542 aa).

Positions 1–265 are amidoligase domain; that stretch reads MARYIFITGG…DSEVLCAFGI (265 aa). S13 lines the CTP pocket. S13 lines the UTP pocket. 14 to 19 is a binding site for ATP; that stretch reads SLGKGI. Residue Y54 participates in L-glutamine binding. D71 is an ATP binding site. 2 residues coordinate Mg(2+): D71 and E139. Residues 146 to 148, 186 to 191, and K222 contribute to the CTP site; these read DIE and KTKPTQ. UTP contacts are provided by residues 186–191 and K222; that span reads KTKPTQ. The Glutamine amidotransferase type-1 domain occupies 291–541; that stretch reads TIAVVGKYTG…IEATVEQSRL (251 aa). A353 contacts L-glutamine. Residue C380 is the Nucleophile; for glutamine hydrolysis of the active site. L-glutamine is bound by residues 381–384, E404, and R469; that span reads FGMQ. Residues H514 and E516 contribute to the active site.

It belongs to the CTP synthase family. In terms of assembly, homotetramer.

The enzyme catalyses UTP + L-glutamine + ATP + H2O = CTP + L-glutamate + ADP + phosphate + 2 H(+). It carries out the reaction L-glutamine + H2O = L-glutamate + NH4(+). The catalysed reaction is UTP + NH4(+) + ATP = CTP + ADP + phosphate + 2 H(+). It functions in the pathway pyrimidine metabolism; CTP biosynthesis via de novo pathway; CTP from UDP: step 2/2. Its activity is regulated as follows. Allosterically activated by GTP, when glutamine is the substrate; GTP has no effect on the reaction when ammonia is the substrate. The allosteric effector GTP functions by stabilizing the protein conformation that binds the tetrahedral intermediate(s) formed during glutamine hydrolysis. Inhibited by the product CTP, via allosteric rather than competitive inhibition. Its function is as follows. Catalyzes the ATP-dependent amination of UTP to CTP with either L-glutamine or ammonia as the source of nitrogen. Regulates intracellular CTP levels through interactions with the four ribonucleotide triphosphates. The chain is CTP synthase from Bartonella quintana (strain Toulouse) (Rochalimaea quintana).